The sequence spans 165 residues: Protein SprT (165 aa).

The SprT-like domain occupies 20 to 163 (EKLAQANLKL…RCVHCGEQLV (144 aa)). Position 78 (His-78) interacts with Zn(2+). Residue Glu-79 is part of the active site. His-82 lines the Zn(2+) pocket.

This sequence belongs to the SprT family. It depends on Zn(2+) as a cofactor.

The protein localises to the cytoplasm. The protein is Protein SprT of Escherichia coli (strain K12 / MC4100 / BW2952).